The primary structure comprises 204 residues: MRIILASSSPRRRQLMELLGIEFEVEKPDVEEEFLESPEETVRELSLRKAEWVFKKRKEEEILVIGSDTVVVLDGNILGKPESLEEAKGMLKKLSGEWHVVYTGVAFVSSETKDVIVSSTKVRFRELPESVIDYYVEKYRPLDKAGAYGIQDFAAVFVEKIEGDFFTVVGFPLGMVWQYLYEKGWWKFASKREDDKGGARVAFG.

Asp-68 functions as the Proton acceptor in the catalytic mechanism.

This sequence belongs to the Maf family. YhdE subfamily. Requires a divalent metal cation as cofactor.

The protein localises to the cytoplasm. The enzyme catalyses dTTP + H2O = dTMP + diphosphate + H(+). It catalyses the reaction UTP + H2O = UMP + diphosphate + H(+). Its function is as follows. Nucleoside triphosphate pyrophosphatase that hydrolyzes dTTP and UTP. May have a dual role in cell division arrest and in preventing the incorporation of modified nucleotides into cellular nucleic acids. The sequence is that of dTTP/UTP pyrophosphatase from Thermotoga petrophila (strain ATCC BAA-488 / DSM 13995 / JCM 10881 / RKU-1).